The sequence spans 266 residues: 3-methyl-2-oxobutanoate hydroxymethyltransferase 2 (266 aa).

Asp45 and Asp84 together coordinate Mg(2+). 3-methyl-2-oxobutanoate is bound by residues 45-46 (DS), Asp84, and Lys112. Glu114 provides a ligand contact to Mg(2+). Catalysis depends on Glu181, which acts as the Proton acceptor.

It belongs to the PanB family. As to quaternary structure, homodecamer; pentamer of dimers. The cofactor is Mg(2+).

It is found in the cytoplasm. It catalyses the reaction 3-methyl-2-oxobutanoate + (6R)-5,10-methylene-5,6,7,8-tetrahydrofolate + H2O = 2-dehydropantoate + (6S)-5,6,7,8-tetrahydrofolate. Its pathway is cofactor biosynthesis; (R)-pantothenate biosynthesis; (R)-pantoate from 3-methyl-2-oxobutanoate: step 1/2. Catalyzes the reversible reaction in which hydroxymethyl group from 5,10-methylenetetrahydrofolate is transferred onto alpha-ketoisovalerate to form ketopantoate. This chain is 3-methyl-2-oxobutanoate hydroxymethyltransferase 2, found in Pseudomonas aeruginosa (strain UCBPP-PA14).